The primary structure comprises 187 residues: tRNA (cytidine(56)-2'-O)-methyltransferase (187 aa).

S-adenosyl-L-methionine is bound by residues leucine 94 and 120 to 124; that span reads GAEKV.

It belongs to the aTrm56 family. Homodimer.

It localises to the cytoplasm. It catalyses the reaction cytidine(56) in tRNA + S-adenosyl-L-methionine = 2'-O-methylcytidine(56) in tRNA + S-adenosyl-L-homocysteine + H(+). Functionally, specifically catalyzes the AdoMet-dependent 2'-O-ribose methylation of cytidine at position 56 in tRNAs. The protein is tRNA (cytidine(56)-2'-O)-methyltransferase of Hyperthermus butylicus (strain DSM 5456 / JCM 9403 / PLM1-5).